Reading from the N-terminus, the 638-residue chain is Probable potassium transport system protein Kup (638 aa).

Residues 1–20 form a disordered region; the sequence is MQVEHEVATEGGQAPASSGH. The next 12 membrane-spanning stretches (helical) occupy residues 24–44, 67–87, 115–135, 153–173, 181–201, 228–248, 263–283, 301–321, 353–373, 382–402, 413–433, and 435–455; these read IAGLAVAAIGVVYGDIGTSPL, ILSLVFWALVTVVSAKYVVFI, AWWLSVLGVFGAALFYGDGMI, PAFKPFVIPIALVVLVGLFVM, VGAIFGPVMVCWFLVLAVLGI, LIGWLALGAVVLAITGGEALY, WFSLVFPALYLNYLGQGALIL, LVYPMVGMATLATIIASQAVI, IYVPGVNWMLLGAVVALVVGF, AYGIAVTLTMMIDTVLAFVVV, AVLFLVVFLAVDIAFFSATTV, and IFAGGWFPLLIGAAIFTLLRT.

It belongs to the HAK/KUP transporter (TC 2.A.72) family.

Its subcellular location is the cell inner membrane. It carries out the reaction K(+)(in) + H(+)(in) = K(+)(out) + H(+)(out). Transport of potassium into the cell. Likely operates as a K(+):H(+) symporter. The protein is Probable potassium transport system protein Kup of Azoarcus sp. (strain BH72).